The following is a 788-amino-acid chain: Ribonucleoside-diphosphate reductase subunit alpha (788 aa).

The region spanning 2-92 (ITVVKRNGRI…LYDLYHKVSG (91 aa)) is the ATP-cone domain. ATP is bound by residues Lys-6, 12–18 (EPLDITK), and Thr-52. Thr-200 serves as a coordination point for GDP. A disulfide bridge connects residues Cys-216 and Cys-497. DTTP-binding positions include 223–225 (DNI) and Arg-253. Asn-424 provides a ligand contact to GDP. The Proton acceptor role is filled by Asn-424. Cys-426 (cysteine radical intermediate) is an active-site residue. GDP is bound by residues Glu-428 and 661 to 663 (SSI). The active-site Proton acceptor is the Glu-428.

The protein belongs to the ribonucleoside diphosphate reductase large chain family. As to quaternary structure, tetramer of two alpha and two beta subunits.

It catalyses the reaction a 2'-deoxyribonucleoside 5'-diphosphate + [thioredoxin]-disulfide + H2O = a ribonucleoside 5'-diphosphate + [thioredoxin]-dithiol. Under complex allosteric control mediated by deoxynucleoside triphosphates and ATP binding to separate specificity and activation sites on the alpha subunit. The type of nucleotide bound at the specificity site determines substrate preference. It seems probable that ATP makes the enzyme reduce CDP and UDP, dGTP favors ADP reduction and dTTP favors GDP reduction. Stimulated by ATP and inhibited by dATP binding to the activity site. In terms of biological role, provides the precursors necessary for DNA synthesis. Catalyzes the biosynthesis of deoxyribonucleotides from the corresponding ribonucleotides. The sequence is that of Ribonucleoside-diphosphate reductase subunit alpha (nrdA) from Helicobacter pylori (strain ATCC 700392 / 26695) (Campylobacter pylori).